The following is a 342-amino-acid chain: L-threonine 3-dehydrogenase (342 aa).

Zn(2+) is bound at residue cysteine 38. Catalysis depends on charge relay system residues threonine 40 and histidine 43. Zn(2+) is bound by residues histidine 63, glutamate 64, cysteine 93, cysteine 96, cysteine 99, and cysteine 107. NAD(+)-binding positions include isoleucine 175, aspartate 195, arginine 200, 262–264 (LGI), and 286–287 (IY).

Belongs to the zinc-containing alcohol dehydrogenase family. Homotetramer. Requires Zn(2+) as cofactor.

The protein localises to the cytoplasm. It carries out the reaction L-threonine + NAD(+) = (2S)-2-amino-3-oxobutanoate + NADH + H(+). The protein operates within amino-acid degradation; L-threonine degradation via oxydo-reductase pathway; glycine from L-threonine: step 1/2. Its function is as follows. Catalyzes the NAD(+)-dependent oxidation of L-threonine to 2-amino-3-ketobutyrate. This chain is L-threonine 3-dehydrogenase, found in Burkholderia cenocepacia (strain HI2424).